The chain runs to 686 residues: MKRINVDLHLLHFPKFRKFQSRKVSSSLPKLELDQKSPQETVFLLGQVLDTYPDIRTLRTVHSRIILEDLRCNSSLGVKLMRAYASLKDVASARKVFDEIPERNVIIINVMIRSYVNNGFYGEGVKVFGTMCGCNVRPDHYTFPCVLKACSCSGTIVIGRKIHGSATKVGLSSTLFVGNGLVSMYGKCGFLSEARLVLDEMSRRDVVSWNSLVVGYAQNQRFDDALEVCREMESVKISHDAGTMASLLPAVSNTTTENVMYVKDMFFKMGKKSLVSWNVMIGVYMKNAMPVEAVELYSRMEADGFEPDAVSITSVLPACGDTSALSLGKKIHGYIERKKLIPNLLLENALIDMYAKCGCLEKARDVFENMKSRDVVSWTAMISAYGFSGRGCDAVALFSKLQDSGLVPDSIAFVTTLAACSHAGLLEEGRSCFKLMTDHYKITPRLEHLACMVDLLGRAGKVKEAYRFIQDMSMEPNERVWGALLGACRVHSDTDIGLLAADKLFQLAPEQSGYYVLLSNIYAKAGRWEEVTNIRNIMKSKGLKKNPGASNVEVNRIIHTFLVGDRSHPQSDEIYRELDVLVKKMKELGYVPDSESALHDVEEEDKETHLAVHSEKLAIVFALMNTKEEEEDSNNTIRITKNLRICGDCHVAAKLISQITSREIIIRDTNRFHVFRFGVCSCGDYW.

12 PPR repeats span residues 73–103 (NSSLGVKLMRAYASLKDVASARKVFDEIPER), 104–138 (NVIIINVMIRSYVNNGFYGEGVKVFGTMCGCNVRP), 139–173 (DHYTFPCVLKACSCSGTIVIGRKIHGSATKVGLSS), 174–204 (TLFVGNGLVSMYGKCGFLSEARLVLDEMSRR), 205–239 (DVVSWNSLVVGYAQNQRFDDALEVCREMESVKISH), 240–272 (DAGTMASLLPAVSNTTTENVMYVKDMFFKMGKK), 273–307 (SLVSWNVMIGVYMKNAMPVEAVELYSRMEADGFEP), 308–342 (DAVSITSVLPACGDTSALSLGKKIHGYIERKKLIP), 343–373 (NLLLENALIDMYAKCGCLEKARDVFENMKSR), 374–408 (DVVSWTAMISAYGFSGRGCDAVALFSKLQDSGLVP), 409–439 (DSIAFVTTLAACSHAGLLEEGRSCFKLMTDH), and 445–475 (RLEHLACMVDLLGRAGKVKEAYRFIQDMSME). The interval 480–555 (VWGALLGACR…NPGASNVEVN (76 aa)) is type E motif. The interval 556 to 586 (RIIHTFLVGDRSHPQSDEIYRELDVLVKKMK) is type E(+) motif. A type DYW motif region spans residues 587-686 (ELGYVPDSES…FGVCSCGDYW (100 aa)).

The protein belongs to the PPR family. PCMP-H subfamily.

This chain is Putative pentatricopeptide repeat-containing protein At3g49142 (PCMP-H77), found in Arabidopsis thaliana (Mouse-ear cress).